Here is a 115-residue protein sequence, read N- to C-terminus: U2-ctenitoxin-Pn1b (115 aa).

An N-terminal signal peptide occupies residues 1-17; sequence MKVAVIILSILVLAAAS. Positions 18–61 are excised as a propeptide; that stretch reads ESIEEYREDFSRPNAMERSANDWIPTAPSAVERSADFAVEELER. Cystine bridges form between Cys64/Cys78, Cys71/Cys84, Cys75/Cys113, Cys77/Cys98, and Cys86/Cys96. A propeptide is located at residue Lys115.

Belongs to the neurotoxin 03 (Tx2) family. 04 subfamily. Expressed by the venom gland.

It is found in the secreted. In terms of biological role, blocks voltage-gated sodium channels (Nav). The polypeptide is U2-ctenitoxin-Pn1b (Phoneutria nigriventer (Brazilian armed spider)).